Reading from the N-terminus, the 345-residue chain is Uroporphyrinogen decarboxylase (345 aa).

Residues Arg27 to Arg31, Phe46, Asp76, Tyr152, Ser207, and His320 contribute to the substrate site.

This sequence belongs to the uroporphyrinogen decarboxylase family. Homodimer.

The protein localises to the cytoplasm. It carries out the reaction uroporphyrinogen III + 4 H(+) = coproporphyrinogen III + 4 CO2. It functions in the pathway porphyrin-containing compound metabolism; protoporphyrin-IX biosynthesis; coproporphyrinogen-III from 5-aminolevulinate: step 4/4. Its function is as follows. Catalyzes the decarboxylation of four acetate groups of uroporphyrinogen-III to yield coproporphyrinogen-III. This Geobacillus thermodenitrificans (strain NG80-2) protein is Uroporphyrinogen decarboxylase.